The primary structure comprises 311 residues: Homoserine kinase (311 aa).

88–98 provides a ligand contact to ATP; it reads PEGLGLGSSGA.

The protein belongs to the GHMP kinase family. Homoserine kinase subfamily.

The protein resides in the cytoplasm. The enzyme catalyses L-homoserine + ATP = O-phospho-L-homoserine + ADP + H(+). The protein operates within amino-acid biosynthesis; L-threonine biosynthesis; L-threonine from L-aspartate: step 4/5. Its function is as follows. Catalyzes the ATP-dependent phosphorylation of L-homoserine to L-homoserine phosphate. This is Homoserine kinase from Saccharolobus islandicus (strain Y.N.15.51 / Yellowstone #2) (Sulfolobus islandicus).